Here is a 344-residue protein sequence, read N- to C-terminus: Gibberellin receptor GID1C (344 aa).

At A2 the chain carries N-acetylalanine. The short motif at 111 to 113 (HGG) is the Involved in the stabilization of the negatively charged intermediate by the formation of the oxyanion hole element. Residues 113 to 114 (GS), Y125, and S189 contribute to the gibberellin A4 site. 4 residues coordinate gibberellin A3: S114, Y125, S189, and F236. S189 is an active-site residue. D287 is an active-site residue. G318 lines the gibberellin A4 pocket. Residue G318 participates in gibberellin A3 binding.

Belongs to the 'GDXG' lipolytic enzyme family. In terms of assembly, interacts with the DELLA proteins GAI, RGA, RGL1, RGL2 and RGL3 in a GA-dependent manner. In terms of tissue distribution, widely expressed.

The protein resides in the nucleus. Functions as a soluble gibberellin (GA) receptor. GA is an essential hormone that regulates growth and development in plants. Binds with high affinity the biologically active gibberellin GA4, but has no affinity for the biologically inactive GAs. In response to GA, interacts with specific DELLA proteins, known as repressors of GA-induced growth, and targets them for degradation via proteasome. Seems to be required for GA signaling that controls root growth, seed germination and stem elongation. Partially redundant with GID1A and GID1B. The polypeptide is Gibberellin receptor GID1C (GID1C) (Arabidopsis thaliana (Mouse-ear cress)).